Reading from the N-terminus, the 196-residue chain is UPF0056 membrane protein BUsg_434 (196 aa).

6 consecutive transmembrane segments (helical) span residues 8 to 28 (TILLILIMDPLGNLPIFMTIL), 45 to 65 (IIALIVMLIFLFVGEKILTIL), 71 to 91 (TVSISGGIILFLIAIKMIFPS), 105 to 125 (FLVPLAIPLVAGPSLLATLML), 134 to 154 (MPYLVGSLLIAWFFTIIILLL), and 174 to 194 (MGLILIMLSTQMFLDGIKAWF).

This sequence belongs to the UPF0056 (MarC) family.

It localises to the cell membrane. This Buchnera aphidicola subsp. Schizaphis graminum (strain Sg) protein is UPF0056 membrane protein BUsg_434.